A 268-amino-acid chain; its full sequence is Interleukin-2 receptor subunit alpha (268 aa).

The first 21 residues, 1–21 (MEPCLLMWGILTFITVSGYTT), serve as a signal peptide directing secretion. The Sushi 1 domain maps to 22 to 81 (DLCDDDPPNLKHATFKALTYKTGTVLNCDCERGFRRISSYMHCTGNSSHASWENKCRCKS). At 22–237 (DLCDDDPPNL…ESFIFTTEYQ (216 aa)) the chain is on the extracellular side. 3 disulfides stabilise this stretch: Cys-24–Cys-64, Cys-49–Cys-77, and Cys-51–Cys-79. Asn-67 is a glycosylation site (N-linked (GlcNAc...) asparagine). Residues 83-112 (SPENRKGKVTTKPEEQKGENPTEMQSQTPP) are disordered. Over residues 85–102 (ENRKGKVTTKPEEQKGEN) the composition is skewed to basic and acidic residues. The Sushi 2 domain maps to 120-183 (GHCREPPPWE…WTQPPLKCIS (64 aa)). Disulfide bonds link Cys-122-Cys-165 and Cys-149-Cys-181. The segment at 186-213 (QFPDDEELQASTDAPAGRDTSSPFITTS) is disordered. Over residues 204-213 (DTSSPFITTS) the composition is skewed to polar residues. A helical membrane pass occupies residues 238-258 (IAVASCVLLLISIVLLSGLTW). Residues 259 to 268 (QRRRRKSRTI) are Cytoplasmic-facing.

In terms of assembly, non-covalent dimer of an alpha and a beta subunit. IL2R exists in 3 different forms: a high affinity dimer, an intermediate affinity monomer (beta subunit), and a low affinity monomer (alpha subunit). The high and intermediate affinity forms also associate with a gamma subunit.

The protein resides in the membrane. Receptor for interleukin-2. The receptor is involved in the regulation of immune tolerance by controlling regulatory T cells (TREGs) activity. TREGs suppress the activation and expansion of autoreactive T-cells. The chain is Interleukin-2 receptor subunit alpha (IL2RA) from Canis lupus familiaris (Dog).